The following is a 283-amino-acid chain: Gap junction beta-1 protein (283 aa).

Over 1 to 22 (MNWTGLYTLLSGVNRHSTAIGR) the chain is Cytoplasmic. The chain crosses the membrane as a helical span at residues 23–45 (VWLSVIFIFRIMVLVVAAESVWG). The Extracellular segment spans residues 46–75 (DEKSSFICNTLQPGCNSVCYDHFFPISHVR). Residues 76–95 (LWSLQLILVSTPALLVAMHV) traverse the membrane as a helical segment. At 96–130 (AHQQHIEKKMLRLEGHGDPLHLEEVKRHKVHISGT) the chain is on the cytoplasmic side. A helical membrane pass occupies residues 131 to 153 (LWWTYVISVVFRLLFEAVFMYVF). At 154 to 191 (YLLYPGYAMVRLVKCEAFPCPNTVDCFVSRPTEKTVFT) the chain is on the extracellular side. The helical transmembrane segment at 192 to 214 (VFMLAASGICIILNVAEVVYLII) threads the bilayer. Residues 215–283 (RACARRAQRR…AEKSDRCSAC (69 aa)) lie on the Cytoplasmic side of the membrane. Residues Ser233, Ser258, Ser266, and Ser277 each carry the phosphoserine modification.

This sequence belongs to the connexin family. Beta-type (group I) subfamily. A connexon is composed of a hexamer of connexins. Interacts with CNST.

The protein resides in the cell membrane. The protein localises to the cell junction. Its subcellular location is the gap junction. Its function is as follows. One gap junction consists of a cluster of closely packed pairs of transmembrane channels, the connexons, through which materials of low MW diffuse from one cell to a neighboring cell. This is Gap junction beta-1 protein (Gjb1) from Mus musculus (Mouse).